The sequence spans 579 residues: CTP synthase 1 (579 aa).

One can recognise a Glutamine amidotransferase type-1 domain in the interval lysine 305–isoleucine 559. The active-site For GATase activity is the cysteine 404. A Glycyl lysine isopeptide (Lys-Gly) (interchain with G-Cter in ubiquitin) cross-link involves residue lysine 422. Catalysis depends on for GATase activity residues histidine 535 and glutamate 537.

Belongs to the CTP synthase family. Homodimer. Oligomerizes to a tetramer in the presence of its substrates UTP and ATP.

The enzyme catalyses UTP + L-glutamine + ATP + H2O = CTP + L-glutamate + ADP + phosphate + 2 H(+). It participates in pyrimidine metabolism; CTP biosynthesis via de novo pathway; CTP from UDP: step 2/2. With respect to regulation, activated by GTP and inhibited by CTP. Catalyzes the ATP-dependent amination of UTP to CTP with either L-glutamine or ammonia as the source of nitrogen. The chain is CTP synthase 1 (URA7) from Saccharomyces cerevisiae (strain ATCC 204508 / S288c) (Baker's yeast).